The chain runs to 360 residues: UDP-N-acetylglucosamine--N-acetylmuramyl-(pentapeptide) pyrophosphoryl-undecaprenol N-acetylglucosamine transferase (360 aa).

Residues 12–14 (TAG), Ser198, and Gln289 contribute to the UDP-N-acetyl-alpha-D-glucosamine site.

It belongs to the glycosyltransferase 28 family. MurG subfamily.

Its subcellular location is the cell membrane. The enzyme catalyses Mur2Ac(oyl-L-Ala-gamma-D-Glu-L-Lys-D-Ala-D-Ala)-di-trans,octa-cis-undecaprenyl diphosphate + UDP-N-acetyl-alpha-D-glucosamine = beta-D-GlcNAc-(1-&gt;4)-Mur2Ac(oyl-L-Ala-gamma-D-Glu-L-Lys-D-Ala-D-Ala)-di-trans,octa-cis-undecaprenyl diphosphate + UDP + H(+). It functions in the pathway cell wall biogenesis; peptidoglycan biosynthesis. In terms of biological role, cell wall formation. Catalyzes the transfer of a GlcNAc subunit on undecaprenyl-pyrophosphoryl-MurNAc-pentapeptide (lipid intermediate I) to form undecaprenyl-pyrophosphoryl-MurNAc-(pentapeptide)GlcNAc (lipid intermediate II). The protein is UDP-N-acetylglucosamine--N-acetylmuramyl-(pentapeptide) pyrophosphoryl-undecaprenol N-acetylglucosamine transferase of Streptococcus equi subsp. equi (strain 4047).